The primary structure comprises 229 residues: Potassium/proton antiporter CemA (229 aa).

3 helical membrane-spanning segments follow: residues 7-27 (LTPL…SLSF), 106-126 (IILH…FFIM), and 189-209 (IISG…KYWI).

Belongs to the CemA family.

The protein localises to the plastid. It localises to the chloroplast inner membrane. The enzyme catalyses K(+)(in) + H(+)(out) = K(+)(out) + H(+)(in). In terms of biological role, contributes to K(+)/H(+) antiport activity by supporting proton efflux to control proton extrusion and homeostasis in chloroplasts in a light-dependent manner to modulate photosynthesis. Prevents excessive induction of non-photochemical quenching (NPQ) under continuous-light conditions. Indirectly promotes efficient inorganic carbon uptake into chloroplasts. This is Potassium/proton antiporter CemA from Ceratophyllum demersum (Rigid hornwort).